The primary structure comprises 287 residues: Nucleotide-binding protein VIBHAR_03667 (287 aa).

8–15 (GHSGAGKS) serves as a coordination point for ATP. 56–59 (DIRN) is a binding site for GTP.

Belongs to the RapZ-like family.

Functionally, displays ATPase and GTPase activities. This Vibrio campbellii (strain ATCC BAA-1116) protein is Nucleotide-binding protein VIBHAR_03667.